Reading from the N-terminus, the 71-residue chain is Beta-defensin 25 (71 aa).

The signal sequence occupies residues 1–22 (MAKWILLIVALLVLGHVPSGST). 3 disulfides stabilise this stretch: cysteine 27–cysteine 54, cysteine 34–cysteine 48, and cysteine 38–cysteine 55.

This sequence belongs to the beta-defensin family.

The protein resides in the secreted. In terms of biological role, has antibacterial activity. The protein is Beta-defensin 25 (Defb25) of Rattus norvegicus (Rat).